A 287-amino-acid polypeptide reads, in one-letter code: Putative ABC transporter ATP-binding protein MM_1038 (287 aa).

An ABC transporter domain is found at 5–238; the sequence is LENISVFYSR…ENVPLPPVAS (234 aa). 40–47 lines the ATP pocket; it reads GEKGAGKS.

The protein belongs to the ABC transporter superfamily.

It is found in the cell membrane. Probably part of an ABC transporter complex. Responsible for energy coupling to the transport system. The protein is Putative ABC transporter ATP-binding protein MM_1038 of Methanosarcina mazei (strain ATCC BAA-159 / DSM 3647 / Goe1 / Go1 / JCM 11833 / OCM 88) (Methanosarcina frisia).